The following is a 37-amino-acid chain: Large ribosomal subunit protein bL36c (37 aa).

The protein belongs to the bacterial ribosomal protein bL36 family.

The protein localises to the plastid. Its subcellular location is the chloroplast. This Oltmannsiellopsis viridis (Marine flagellate) protein is Large ribosomal subunit protein bL36c.